A 543-amino-acid polypeptide reads, in one-letter code: Serine/threonine-protein kinase Chk2 (543 aa).

Positions 1-66 are disordered; sequence MSRESDVEAQ…SGTLSSLETV (66 aa). Over residues 8 to 22 the composition is skewed to polar residues; sequence EAQQSHGSSACSQPH. Over residues 23 to 62 the composition is skewed to low complexity; the sequence is GSVTQSQGSSSQSQGISSSSTSTMPNSSQSSHSSSGTLSS. S62 bears the Phosphoserine; by PLK3 mark. Phosphothreonine; by ATM and MAP3K20 is present on T68. S73 bears the Phosphoserine; by PLK3 mark. The FHA domain maps to 113–175; that stretch reads YWFGRDKSCE…NGTFVNTELV (63 aa). A Protein kinase domain is found at 220-486; that stretch reads YIMSKTLGSG…TEEALRHPWL (267 aa). ATP-binding positions include 227 to 234, K249, and 302 to 308; these read GSGACGEV and ELMEGGE. The Proton acceptor role is filled by D347. Residues 351-352 and D368 contribute to the ATP site; that span reads EN. Residues 368–394 are T-loop/activation segment; the sequence is DFGHSKILGETSLMRTLCGTPTYLAPE. Phosphoserine; by autocatalysis is present on S379. Phosphothreonine; by autocatalysis occurs at positions 383 and 387. Phosphoserine is present on S456. Polar residues predominate over residues 506–517; it reads TALPQVLAQPST. Residues 506–538 form a disordered region; sequence TALPQVLAQPSTSRKRPREGEAEGAETTKRPAV. Positions 523–534 are enriched in basic and acidic residues; the sequence is REGEAEGAETTK.

Belongs to the protein kinase superfamily. CAMK Ser/Thr protein kinase family. CHK2 subfamily. Homodimer. Homodimerization is part of the activation process but the dimer may dissociate following activation. Interacts with PML. Interacts with TP53. Interacts with RB1; phosphorylates RB1. Interacts with BRCA1. Interacts (phosphorylated at Thr-68) with MDC1; requires ATM-mediated phosphorylation of CHEK2. Interacts with TP53BP1; modulates CHEK2 phosphorylation at Thr-68 in response to ionizing radiation. Interacts with CDC25A; phosphorylates CDC25A and mediates its degradation in response to ionizing radiation. Interacts with CUL1; mediates CHEK2 ubiquitination and regulation. Interacts with CDKN2AIP. Interacts (via protein kinase domain) with CCAR2 (via N-terminus). Interacts with SIRT1. Mg(2+) serves as cofactor. Phosphorylated. Phosphorylated at Ser-73 by PLK3 in response to DNA damage, promoting phosphorylation at Thr-68 by ATM and the G2/M transition checkpoint. Phosphorylation at Thr-68 induces homodimerization. Autophosphorylates at Thr-383 and Thr-387 in the T-loop/activation segment upon dimerization to become fully active and phosphorylate its substrates like for instance CDC25C. DNA damage-induced autophosphorylation at Ser-379 induces CUL1-mediated ubiquitination and regulates the pro-apoptotic function. Phosphorylation at Ser-456 also regulates ubiquitination. Phosphorylated by PLK4. Post-translationally, ubiquitinated. CUL1-mediated ubiquitination regulates the pro-apoptotic function. Ubiquitination may also regulate protein stability. Ubiquitinated by RNF8 via 'Lys-48'-linked ubiquitination. As to expression, high expression is found in testis, spleen, colon and peripheral blood leukocytes. Low expression is found in other tissues.

The protein resides in the nucleus. Its subcellular location is the PML body. The protein localises to the nucleoplasm. The catalysed reaction is L-seryl-[protein] + ATP = O-phospho-L-seryl-[protein] + ADP + H(+). The enzyme catalyses L-threonyl-[protein] + ATP = O-phospho-L-threonyl-[protein] + ADP + H(+). With respect to regulation, activated through phosphorylation at Thr-68 by ATM in response to DNA double-strand breaks. Activation is modulated by several mediators including MDC1 and TP53BP1. Induces homodimerization with exchange of the T-loop/activation segment between protomers and transphosphorylation of the protomers. The autophosphorylated kinase dimer is fully active. Negatively regulated by PPM1D through dephosphorylation of Thr-68. Its function is as follows. Serine/threonine-protein kinase which is required for checkpoint-mediated cell cycle arrest, activation of DNA repair and apoptosis in response to the presence of DNA double-strand breaks. May also negatively regulate cell cycle progression during unperturbed cell cycles. Following activation, phosphorylates numerous effectors preferentially at the consensus sequence [L-X-R-X-X-S/T]. Regulates cell cycle checkpoint arrest through phosphorylation of CDC25A, CDC25B and CDC25C, inhibiting their activity. Inhibition of CDC25 phosphatase activity leads to increased inhibitory tyrosine phosphorylation of CDK-cyclin complexes and blocks cell cycle progression. May also phosphorylate NEK6 which is involved in G2/M cell cycle arrest. Regulates DNA repair through phosphorylation of BRCA2, enhancing the association of RAD51 with chromatin which promotes DNA repair by homologous recombination. Also stimulates the transcription of genes involved in DNA repair (including BRCA2) through the phosphorylation and activation of the transcription factor FOXM1. Regulates apoptosis through the phosphorylation of p53/TP53, MDM4 and PML. Phosphorylation of p53/TP53 at 'Ser-20' by CHEK2 may alleviate inhibition by MDM2, leading to accumulation of active p53/TP53. Phosphorylation of MDM4 may also reduce degradation of p53/TP53. Also controls the transcription of pro-apoptotic genes through phosphorylation of the transcription factor E2F1. Tumor suppressor, it may also have a DNA damage-independent function in mitotic spindle assembly by phosphorylating BRCA1. Its absence may be a cause of the chromosomal instability observed in some cancer cells. Promotes the CCAR2-SIRT1 association and is required for CCAR2-mediated SIRT1 inhibition. Under oxidative stress, promotes ATG7 ubiquitination by phosphorylating the E3 ubiquitin ligase TRIM32 at 'Ser-55' leading to positive regulation of the autophagosme assembly. Functionally, (Microbial infection) Phosphorylates herpes simplex virus 1/HHV-1 protein ICP0 and thus activates its SUMO-targeted ubiquitin ligase activity. This chain is Serine/threonine-protein kinase Chk2, found in Homo sapiens (Human).